The chain runs to 315 residues: MDNNEISSHQPVLLREAIQALAIRRDGLYIDGTFGRGGHAQAILAALSSEGRLLGVDKDPAAIAAGHALAQKDGRFTIVQASIGDLARVVSERGWLKRINGVLFDLGVSSPQLESAERGFSFLRDGPLDMRMNPTVGQSAAEWLANAKEKEIAEVLRVYGEERYCRRIARAIIQARELNSLTRTKQLAEVVAKAIPRWERRMHPATRSFQAIRIFINHELEELRAALEQALAALAVKGRLAVISFHSLEDRIVKRFFREKARGEELPPDLPVMQKDFQQASLKVLGKPIWPVPEEIAHNPRARSARLRVAEKQTY.

S-adenosyl-L-methionine is bound by residues 37–39 (GGH), aspartate 57, aspartate 105, and glutamine 112.

It belongs to the methyltransferase superfamily. RsmH family.

It localises to the cytoplasm. The enzyme catalyses cytidine(1402) in 16S rRNA + S-adenosyl-L-methionine = N(4)-methylcytidine(1402) in 16S rRNA + S-adenosyl-L-homocysteine + H(+). Specifically methylates the N4 position of cytidine in position 1402 (C1402) of 16S rRNA. The protein is Ribosomal RNA small subunit methyltransferase H of Nitrosococcus oceani (strain ATCC 19707 / BCRC 17464 / JCM 30415 / NCIMB 11848 / C-107).